A 101-amino-acid chain; its full sequence is Large ribosomal subunit protein eL36 (101 aa).

2 disordered regions span residues 1–31 (MGEIAVGLNKGHQVTKKAGTPRPSRRKGFLS) and 75–101 (GTHMRGKKKREEMAGVLRKMQAASKGE).

It belongs to the eukaryotic ribosomal protein eL36 family.

In Ulva compressa (Green alga), this protein is Large ribosomal subunit protein eL36 (RL36).